We begin with the raw amino-acid sequence, 117 residues long: G antigen 12J (117 aa).

The disordered stretch occupies residues 1 to 117; the sequence is MSWRGRSTYY…PEEGEKQSQC (117 aa). 2 stretches are compositionally biased toward acidic residues: residues 32–45 and 87–96; these read FSDE…EEGE and ECEDGPDGQE. The segment covering 103–117 has biased composition (basic and acidic residues); it reads EEVKTPEEGEKQSQC.

It belongs to the GAGE family.

This is G antigen 12J (GAGE12J) from Homo sapiens (Human).